An 88-amino-acid polypeptide reads, in one-letter code: Small ribosomal subunit protein uS17 (88 aa).

It belongs to the universal ribosomal protein uS17 family. In terms of assembly, part of the 30S ribosomal subunit.

One of the primary rRNA binding proteins, it binds specifically to the 5'-end of 16S ribosomal RNA. The protein is Small ribosomal subunit protein uS17 of Stutzerimonas stutzeri (strain A1501) (Pseudomonas stutzeri).